The primary structure comprises 151 residues: Probable cGMP 3',5'-cyclic phosphodiesterase subunit delta (151 aa).

Belongs to the PDE6D/unc-119 family. Interacts with Pde6.

It is found in the nucleus. Its subcellular location is the cytoplasm. In Drosophila virilis (Fruit fly), this protein is Probable cGMP 3',5'-cyclic phosphodiesterase subunit delta.